A 421-amino-acid polypeptide reads, in one-letter code: Testin (421 aa).

Residues 92–199 (MILTNPVAAK…GDVKLPCEMD (108 aa)) form the PET domain. A disordered region spans residues 133–164 (EKQPVAGSEGAQYRKKQLAKQLPAHDQDPSKC). Over residues 155 to 164 (PAHDQDPSKC) the composition is skewed to basic and acidic residues. LIM zinc-binding domains are found at residues 234 to 297 (YSCY…CDSE), 299 to 359 (PRCA…NHAV), and 362 to 421 (QGCH…KMMS).

It belongs to the prickle / espinas / testin family. In terms of assembly, interacts via LIM domain 1 with ZYX. Interacts (via LIM domain 3) with ENAH and VASP. Interacts with ALKBH4, talin, actin, alpha-actinin, GRIP1 and PXN. Interacts (via LIM domain 2) with ACTL7A (via N-terminus). Heterodimer with ACTL7A; the heterodimer interacts with ENAH to form a heterotrimer.

The protein resides in the cytoplasm. Its subcellular location is the cell junction. The protein localises to the focal adhesion. Scaffold protein that may play a role in cell adhesion, cell spreading and in the reorganization of the actin cytoskeleton. Plays a role in the regulation of cell proliferation. May act as a tumor suppressor. This Microcebus murinus (Gray mouse lemur) protein is Testin (TES).